We begin with the raw amino-acid sequence, 380 residues long: Alpha-N-acetylneuraminate alpha-2,8-sialyltransferase ST8SIA3 (380 aa).

Residues 1–9 (MRNCKMARV) are Cytoplasmic-facing. A helical; Signal-anchor for type II membrane protein membrane pass occupies residues 10 to 33 (ASVLGLVMLSVALLNLSLISYVSL). Over 34-380 (KKENIFATPK…LTKLTLSHCA (347 aa)) the chain is Lumenal. Residues asparagine 93 and asparagine 113 are each glycosylated (N-linked (GlcNAc...) asparagine). 2 disulfide bridges follow: cysteine 162–cysteine 313 and cysteine 176–cysteine 379. 2 residues coordinate CMP-N-acetyl-beta-neuraminate: asparagine 167 and asparagine 190. N-linked (GlcNAc...) asparagine glycosylation is present at asparagine 206. Serine 300, threonine 301, glycine 302, tryptophan 322, tyrosine 336, and histidine 337 together coordinate CMP-N-acetyl-beta-neuraminate. Histidine 354 serves as the catalytic Proton donor/acceptor.

Belongs to the glycosyltransferase 29 family. Homodimer. Autopolysialylated.

Its subcellular location is the golgi apparatus membrane. It carries out the reaction [N-acetyl-alpha-D-neuraminosyl-(2-&gt;8)](n) + CMP-N-acetyl-beta-neuraminate = [N-acetyl-alpha-D-neuraminosyl-(2-&gt;8)](n+1) + CMP + H(+). The enzyme catalyses alpha-Neu5Ac-(2-&gt;3)-beta-D-Gal-(1-&gt;4)-6S-D-GlcNAc + CMP-N-acetyl-beta-neuraminate = alpha-Neu5Ac-(2-&gt;8)-alpha-Neu5Ac-(2-&gt;3)-beta-D-Gal-(1-&gt;4)-6S-D-GlcNAc + CMP + H(+). It catalyses the reaction a ganglioside GM3 (d18:1(4E)) + CMP-N-acetyl-beta-neuraminate = a ganglioside GD3 (d18:1(4E)) + CMP + H(+). The catalysed reaction is a ganglioside GM3 + CMP-N-acetyl-beta-neuraminate = a ganglioside GD3 + CMP + H(+). It carries out the reaction an N-acetyl-alpha-neuraminyl-(2-&gt;3)-beta-D-galactosyl derivative + CMP-N-acetyl-beta-neuraminate = an N-acetyl-alpha-neuraminyl-(2-&gt;8)-N-acetyl-alpha-neuraminyl-(2-&gt;3)-beta-D-galactosyl derivative + CMP + H(+). The enzyme catalyses an N-acetyl-alpha-neuraminyl-(2-&gt;3)-beta-D-galactosyl-(1-&gt;4)-N-acetyl-beta-D-glucosaminyl derivative + CMP-N-acetyl-beta-neuraminate = an alpha-Neu5Ac-(2-&gt;8)-alpha-Neu5Ac-(2-&gt;3)-beta-D-Gal-(1-&gt;4)-beta-D-GlcNAc derivative + CMP + H(+). It functions in the pathway protein modification; protein glycosylation. Its function is as follows. Catalyzes the transfer of sialic acid from a CMP-linked sialic acid donor onto a terminal alpha-2,3-, alpha-2,6-, or alpha-2,8-linked sialic acid of an acceptor, such as N-linked oligosaccharides of glycoproteins and glycolipids through alpha-2,8-linkages. Forms oligosialic and polysialic acid on various sialylated N-acetyllactosamine oligosaccharides of glycoproteins, including FETUB N-glycans, a2-HS-glycoprotein (AHSG) and alpha 2,3-sialylated glycosphingolipids, such as alpha 2,3-sialylparagloboside and ganglioside GM3 and to a lesser extent NCAM1 N-glycans. However, it is much more specific to N-linked oligosaccharides of glycoproteins than glycosphingolipids. 2,3-sialylparagloboside serves as the best acceptor substrate among the glycolipids. alpha-Neu5Ac-(2-&gt;8)-alpha-Neu5Ac-(2-&gt;3)-beta-D-Gal-(1-&gt;4)-6S-D-GlcNAc and monosialyl and disialyl N-acetyllactosamines are the best acceptor substrates among glycoproteins. May plays critical role in the striatum by mediating the formation of disialylated and trisialylated terminal glycotopes on N- and O-glycans of specific striatal proteins, regulating their distribution in lipid rafts, affecting their interaction with other binding partners, and subsequently modulating striatal functions. The sequence is that of Alpha-N-acetylneuraminate alpha-2,8-sialyltransferase ST8SIA3 from Pan troglodytes (Chimpanzee).